The chain runs to 144 residues: Peptide methionine sulfoxide reductase MsrB (144 aa).

The region spanning 5-128 (KEELRQRIGE…NSAALQFIPV (124 aa)) is the MsrB domain. The active-site Nucleophile is the Cys117.

Belongs to the MsrB Met sulfoxide reductase family.

It carries out the reaction L-methionyl-[protein] + [thioredoxin]-disulfide + H2O = L-methionyl-(R)-S-oxide-[protein] + [thioredoxin]-dithiol. The sequence is that of Peptide methionine sulfoxide reductase MsrB from Ligilactobacillus salivarius (strain UCC118) (Lactobacillus salivarius).